The chain runs to 171 residues: NADH-quinone oxidoreductase subunit B 1 (171 aa).

[4Fe-4S] cluster contacts are provided by C44, C45, C110, and C139.

It belongs to the complex I 20 kDa subunit family. In terms of assembly, NDH-1 is composed of 14 different subunits. Subunits NuoB, C, D, E, F, and G constitute the peripheral sector of the complex. It depends on [4Fe-4S] cluster as a cofactor.

Its subcellular location is the cell inner membrane. The enzyme catalyses a quinone + NADH + 5 H(+)(in) = a quinol + NAD(+) + 4 H(+)(out). Its function is as follows. NDH-1 shuttles electrons from NADH, via FMN and iron-sulfur (Fe-S) centers, to quinones in the respiratory chain. The immediate electron acceptor for the enzyme in this species is believed to be ubiquinone. Couples the redox reaction to proton translocation (for every two electrons transferred, four hydrogen ions are translocated across the cytoplasmic membrane), and thus conserves the redox energy in a proton gradient. This chain is NADH-quinone oxidoreductase subunit B 1, found in Opitutus terrae (strain DSM 11246 / JCM 15787 / PB90-1).